Reading from the N-terminus, the 3061-residue chain is Genome polyprotein (3061 aa).

A Peptidase S30 domain is found at 141–284 (KLTEGQMNHL…QGVMDSMVQF (144 aa)). Catalysis depends on for P1 proteinase activity residues H192, D201, and S235. Residues 334–337 (KITC) carry the Involved in interaction with stylet and aphid transmission motif. Residues 592–594 (PTK) carry the Involved in virions binding and aphid transmission motif. The 123-residue stretch at 618–740 (LYIARQGFCY…ESDIKHYRVG (123 aa)) folds into the Peptidase C6 domain. Catalysis depends on for helper component proteinase activity residues C626 and H699. In terms of domain architecture, Helicase ATP-binding spans 1229–1381 (DIAHSEHLDF…TQQPVKLIVE (153 aa)). Position 1242-1249 (1242-1249 (GAVGSGKS)) interacts with ATP. A DECH box motif is present at residues 1331 to 1334 (DECH). The Helicase C-terminal domain maps to 1400-1559 (DVVQFGSNVL…NLPVMTGGVS (160 aa)). Positions 1884 to 1892 (RKKGKGKGT) match the Nuclear localization signal motif. Y1907 bears the O-(5'-phospho-RNA)-tyrosine mark. One can recognise a Peptidase C4 domain in the interval 2032–2250 (AKSLMRGLRD…VLWGPLKLKE (219 aa)). Catalysis depends on for nuclear inclusion protein A activity residues H2077, D2112, and C2182. The RdRp catalytic domain occupies 2517–2641 (WVYCDADGSQ…AVNPEKESIL (125 aa)). Residues 2795–2835 (GNDTIDAGGSTKKDAKQEQGSIQPNLNKEKEKDVNVGTSGT) are disordered. Residue T3044 is modified to Phosphothreonine.

This sequence belongs to the potyviridae genome polyprotein family. As to quaternary structure, interacts with host eIF4E protein (via cap-binding region); this interaction mediates the translation of the VPg-viral RNA conjugates. Part of a complex that comprises VPg, RNA, host EIF4E and EIF4G; this interaction mediates the translation of the VPg-viral RNA conjugates. Post-translationally, VPg is uridylylated by the polymerase and is covalently attached to the 5'-end of the genomic RNA. This uridylylated form acts as a nucleotide-peptide primer for the polymerase. Potyviral RNA is expressed as two polyproteins which undergo post-translational proteolytic processing. Genome polyprotein is processed by NIa-pro, P1 and HC-pro proteinases resulting in the production of at least ten individual proteins. P3N-PIPO polyprotein is cleaved by P1 and HC-pro proteinases resulting in the production of three individual proteins. The P1 proteinase and the HC-pro cleave only their respective C-termini autocatalytically. 6K1 is essential for proper proteolytic separation of P3 from CI.

Its subcellular location is the host cytoplasmic vesicle. The protein localises to the host nucleus. The protein resides in the virion. It catalyses the reaction RNA(n) + a ribonucleoside 5'-triphosphate = RNA(n+1) + diphosphate. The enzyme catalyses Hydrolyzes glutaminyl bonds, and activity is further restricted by preferences for the amino acids in P6 - P1' that vary with the species of potyvirus, e.g. Glu-Xaa-Xaa-Tyr-Xaa-Gln-|-(Ser or Gly) for the enzyme from tobacco etch virus. The natural substrate is the viral polyprotein, but other proteins and oligopeptides containing the appropriate consensus sequence are also cleaved.. The catalysed reaction is Hydrolyzes a Gly-|-Gly bond at its own C-terminus, commonly in the sequence -Tyr-Xaa-Val-Gly-|-Gly, in the processing of the potyviral polyprotein.. Required for aphid transmission and also has proteolytic activity. Only cleaves a Gly-Gly dipeptide at its own C-terminus. Interacts with virions and aphid stylets. Acts as a suppressor of RNA-mediated gene silencing, also known as post-transcriptional gene silencing (PTGS), a mechanism of plant viral defense that limits the accumulation of viral RNAs. May have RNA-binding activity. Functionally, has helicase activity. It may be involved in replication. Its function is as follows. Indispensable for virus replication. Reduces the abundance of host transcripts related to jasmonic acid biosynthesis therefore altering the host defenses. In order to increase its own stability, decreases host protein degradation pathways. In terms of biological role, indispensable for virus replication. Mediates the cap-independent, EIF4E-dependent translation of viral genomic RNAs. Binds to the cap-binding site of host EIF4E and thus interferes with the host EIF4E-dependent mRNA export and translation. VPg-RNA directly binds EIF4E and is a template for transcription. Also forms trimeric complexes with EIF4E-EIF4G, which are templates for translation. Functionally, has RNA-binding and proteolytic activities. Its function is as follows. An RNA-dependent RNA polymerase that plays an essential role in the virus replication. In terms of biological role, involved in aphid transmission, cell-to-cell and systemis movement, encapsidation of the viral RNA and in the regulation of viral RNA amplification. This is Genome polyprotein from Potato virus Y (strain Hungarian) (PVY).